A 624-amino-acid polypeptide reads, in one-letter code: Pentatricopeptide repeat-containing protein At4g31070, mitochondrial (624 aa).

The transit peptide at 1–15 (MRWVKLGRRVIMSRA) directs the protein to the mitochondrion. PPR repeat units lie at residues 56–91 (FTAI…GADC), 92–122 (DTVV…MLHR), 123–157 (DTVS…GFIP), 158–192 (KSEL…DERM), 195–225 (SVLL…MEVK), 226–260 (NEVS…NLRP), 261–296 (NRVT…GCHA), 297–327 (DERL…SKVR), 328–362 (DVVM…GIEA), 363–397 (NSVT…GFMS), 398–428 (HILL…LTEK), 429–463 (DLVS…GHEV), 464–498 (DDMA…HMPV), and 499–529 (TLEH…MPMK). Positions 534-610 (IWSSLLSACE…CYGFSKIEPE (77 aa)) are type E motif.

It belongs to the PPR family. PCMP-E subfamily.

It is found in the mitochondrion. The chain is Pentatricopeptide repeat-containing protein At4g31070, mitochondrial (PCMP-E7) from Arabidopsis thaliana (Mouse-ear cress).